The primary structure comprises 97 residues: YcgL domain-containing protein CKO_01183 (97 aa).

The 85-residue stretch at 1-85 folds into the YcgL domain; the sequence is MFCVIYRSSK…PPEDLLKQHL (85 aa). Residues 74–97 form a disordered region; sequence PPPPEDLLKQHLSAPGENKPDAKS.

In Citrobacter koseri (strain ATCC BAA-895 / CDC 4225-83 / SGSC4696), this protein is YcgL domain-containing protein CKO_01183.